A 426-amino-acid polypeptide reads, in one-letter code: UDP-N-acetylglucosamine 1-carboxyvinyltransferase (426 aa).

Phosphoenolpyruvate is bound at residue 22-23 (KN). A UDP-N-acetyl-alpha-D-glucosamine-binding site is contributed by R99. C123 functions as the Proton donor in the catalytic mechanism. The residue at position 123 (C123) is a 2-(S-cysteinyl)pyruvic acid O-phosphothioketal. Residues 128-132 (RPIDL), D313, and I335 contribute to the UDP-N-acetyl-alpha-D-glucosamine site.

It belongs to the EPSP synthase family. MurA subfamily.

The protein resides in the cytoplasm. The enzyme catalyses phosphoenolpyruvate + UDP-N-acetyl-alpha-D-glucosamine = UDP-N-acetyl-3-O-(1-carboxyvinyl)-alpha-D-glucosamine + phosphate. Its pathway is cell wall biogenesis; peptidoglycan biosynthesis. Its function is as follows. Cell wall formation. Adds enolpyruvyl to UDP-N-acetylglucosamine. This Zymomonas mobilis subsp. mobilis (strain ATCC 31821 / ZM4 / CP4) protein is UDP-N-acetylglucosamine 1-carboxyvinyltransferase.